Reading from the N-terminus, the 704-residue chain is Fatty acid oxidation complex subunit alpha (704 aa).

The enoyl-CoA hydratase stretch occupies residues 1–190 (MSEQKAFSLK…KLGVVDACVP (190 aa)). The tract at residues 308–704 (TAVNKVGVLG…RAGEGRNFYD (397 aa)) is 3-hydroxyacyl-CoA dehydrogenase.

This sequence in the N-terminal section; belongs to the enoyl-CoA hydratase/isomerase family. In the central section; belongs to the 3-hydroxyacyl-CoA dehydrogenase family. As to quaternary structure, heterotetramer of two alpha chains (FadJ) and two beta chains (FadI).

It is found in the cytoplasm. The catalysed reaction is a (3S)-3-hydroxyacyl-CoA = a (2E)-enoyl-CoA + H2O. It carries out the reaction a 4-saturated-(3S)-3-hydroxyacyl-CoA = a (3E)-enoyl-CoA + H2O. The enzyme catalyses a (3S)-3-hydroxyacyl-CoA + NAD(+) = a 3-oxoacyl-CoA + NADH + H(+). It catalyses the reaction (3S)-3-hydroxybutanoyl-CoA = (3R)-3-hydroxybutanoyl-CoA. It functions in the pathway lipid metabolism; fatty acid beta-oxidation. Catalyzes the formation of a hydroxyacyl-CoA by addition of water on enoyl-CoA. Also exhibits 3-hydroxyacyl-CoA epimerase and 3-hydroxyacyl-CoA dehydrogenase activities. This is Fatty acid oxidation complex subunit alpha from Vibrio campbellii (strain ATCC BAA-1116).